The chain runs to 309 residues: Protein FdhE (309 aa).

This sequence belongs to the FdhE family.

Its subcellular location is the cytoplasm. Functionally, necessary for formate dehydrogenase activity. This chain is Protein FdhE, found in Escherichia coli O127:H6 (strain E2348/69 / EPEC).